We begin with the raw amino-acid sequence, 865 residues long: Carbohydrate-responsive element-binding protein (865 aa).

Disordered stretches follow at residues 15–41 (PRVV…AGGL) and 53–77 (MVSS…LADF). Residues serine 20, serine 23, and serine 25 each carry the phosphoserine modification. Threonine 27 bears the Phosphothreonine mark. A Phosphoserine modification is found at serine 196. 2 disordered regions span residues 334–392 (GILG…TKMP) and 500–653 (QPRC…LSRG). A compositionally biased stretch (polar residues) spans 351 to 368 (GMTPLSGNTRLQARNSCS). Positions 515 to 533 (ASPPTLTSATASPTATATA) are enriched in low complexity. The residue at position 568 (serine 568) is a Phosphoserine; by AMPK. The span at 583–597 (PPIPAPTPPRPPPGP) shows a compositional bias: pro residues. Serine 615, serine 627, and serine 644 each carry phosphoserine. Residues 662–716 (NRRITHISAEQKRRFNIKLGFDTLHGLVSTLSAQPSLKVSKATTLQKTAEYILML) enclose the bHLH domain. A leucine-zipper region spans residues 716–737 (LQQERAAMQEEAQQLRDEIEEL).

As to quaternary structure, binds DNA as a heterodimer with TCFL4/MLX. Post-translationally, phosphorylation at Ser-568 by AMPK inactivates the DNA-binding activity.

The protein resides in the nucleus. In terms of biological role, transcriptional repressor. Binds to the canonical and non-canonical E box sequences 5'-CACGTG-3'. This is Carbohydrate-responsive element-binding protein (Mlxipl) from Rattus norvegicus (Rat).